Consider the following 187-residue polypeptide: Large ribosomal subunit protein uL5 (187 aa).

Belongs to the universal ribosomal protein uL5 family. As to quaternary structure, part of the 50S ribosomal subunit; part of the 5S rRNA/L5/L18/L25 subcomplex. Contacts the 5S rRNA and the P site tRNA. Forms a bridge to the 30S subunit in the 70S ribosome.

In terms of biological role, this is one of the proteins that bind and probably mediate the attachment of the 5S RNA into the large ribosomal subunit, where it forms part of the central protuberance. In the 70S ribosome it contacts protein S13 of the 30S subunit (bridge B1b), connecting the 2 subunits; this bridge is implicated in subunit movement. Contacts the P site tRNA; the 5S rRNA and some of its associated proteins might help stabilize positioning of ribosome-bound tRNAs. The polypeptide is Large ribosomal subunit protein uL5 (Mycobacterium avium (strain 104)).